The chain runs to 82 residues: Acyl carrier protein (82 aa).

In terms of domain architecture, Carrier spans 2 to 77; the sequence is DNVADRVKKV…QAIDYVSAHI (76 aa). Residue S37 is modified to O-(pantetheine 4'-phosphoryl)serine.

This sequence belongs to the acyl carrier protein (ACP) family. Post-translationally, 4'-phosphopantetheine is transferred from CoA to a specific serine of apo-ACP by AcpS. This modification is essential for activity because fatty acids are bound in thioester linkage to the sulfhydryl of the prosthetic group.

The protein resides in the cytoplasm. It participates in lipid metabolism; fatty acid biosynthesis. Functionally, carrier of the growing fatty acid chain in fatty acid biosynthesis. This chain is Acyl carrier protein, found in Acidithiobacillus ferrooxidans (strain ATCC 23270 / DSM 14882 / CIP 104768 / NCIMB 8455) (Ferrobacillus ferrooxidans (strain ATCC 23270)).